We begin with the raw amino-acid sequence, 219 residues long: Small ribosomal subunit protein uS3 (219 aa).

One can recognise a KH type-2 domain in the interval 38-106 (VRKFVKTKLQ…QVAVNIVEVK (69 aa)).

The protein belongs to the universal ribosomal protein uS3 family. In terms of assembly, part of the 30S ribosomal subunit. Forms a tight complex with proteins S10 and S14.

Its function is as follows. Binds the lower part of the 30S subunit head. Binds mRNA in the 70S ribosome, positioning it for translation. The chain is Small ribosomal subunit protein uS3 from Desulfitobacterium hafniense (strain DSM 10664 / DCB-2).